The chain runs to 291 residues: Protein US2 (291 aa).

Position 2 is an N-acetylglycine; by host (Gly2). The segment at 223–281 (NKPRPASSRPHPATHPTQRPCFTCMGRPEIPDEPSWQTGDDDPQNPGPPLAVGDEWPPS) is disordered.

Belongs to the herpesviridae HHV-1 US2 protein family. Interacts with host KRT18. Interacts with host MAP3K7; this interaction induces host NF-kappa-B pathway.

Its subcellular location is the virion. It is found in the host cytoplasm. The protein localises to the host cell surface. The protein resides in the host nucleus. Functionally, plays a role in the activation of the host NF-kappa-B pathway by interacting with and thus activating the component MAP3K7. This Human herpesvirus 2 (strain HG52) (HHV-2) protein is Protein US2.